The chain runs to 296 residues: Glutamate 5-kinase (296 aa).

Lys-15 is a binding site for ATP. Substrate-binding residues include Ser-55, Asp-159, and Asn-186. ATP contacts are provided by residues 206–207 (SD) and 248–254 (TGGIATK).

It belongs to the glutamate 5-kinase family.

It is found in the cytoplasm. It carries out the reaction L-glutamate + ATP = L-glutamyl 5-phosphate + ADP. Its pathway is amino-acid biosynthesis; L-proline biosynthesis; L-glutamate 5-semialdehyde from L-glutamate: step 1/2. Functionally, catalyzes the transfer of a phosphate group to glutamate to form L-glutamate 5-phosphate. The sequence is that of Glutamate 5-kinase from Treponema pallidum (strain Nichols).